A 377-amino-acid chain; its full sequence is Short chain dehydrogenase gsfE (377 aa).

NADP(+) contacts are provided by D89, Q121, Y226, A266, and S268. Y226 acts as the Proton donor in catalysis.

The protein belongs to the short-chain dehydrogenases/reductases (SDR) family. Highly divergent.

The enzyme catalyses dehydrogriseofulvin + NADPH + H(+) = griseofulvin + NADP(+). It participates in secondary metabolite biosynthesis; terpenoid biosynthesis. Its function is as follows. Short chain dehydrogenase; part of the gene cluster that mediates the biosynthesis of griseofulvin, an important antifungal drug that has been in use for a long time for treating dermatophyte infections. The first step of the pathway is the formation of the heptaketide backbone by gsfA which is initiated by priming with acetyl-CoA, followed by sequential condensations of 6 malonyl-CoA units. The resulting benzophenone can undergo a spontaneous dehydration to form norlichexanthone. However, the true precursor for the griseofulvin biosynthesis is not norlichexanthone, but the heptaketide benzophenone that is O-methylated at 3-OH by gsfB to produce griseophenone D which is further methylated at 9-OH by gsfC to yield griseophenone C. Griseophenone C is then substrate of halogenase gsfI which is responsible for the regio-specific chlorination at the C13 position to form griseophenone B. The cytochrome P450 gsfF catalyzes the coupling of orcinol and phloroglucinol rings in griseophenone B to form desmethyl-dehydrogriseofulvin A which is further methylated at 5-OH by gsfD to yield dehydrogriseofulvin. Finally, gsfE performs stereospecific reduction of enone 18 of dehydrogriseofulvin to afford the final product griseofulvin. In Penicillium aethiopicum, this protein is Short chain dehydrogenase gsfE.